The following is a 522-amino-acid chain: Target of rapamycin complex 2 subunit MAPKAP1 (522 aa).

An N-acetylalanine modification is found at Ala-2. The tract at residues 2-184 (AFLDNPTIIL…KKIDVYLPLH (183 aa)) is interaction with MAP3K2. Residues 2–267 (AFLDNPTIIL…GFSTLALVEK (266 aa)) are interaction with NBN. Thr-86 carries the phosphothreonine modification. 4 positions are modified to phosphoserine: Ser-128, Ser-186, Ser-315, and Ser-356. Residues 139–267 (QSILSVRLEQ…GFSTLALVEK (129 aa)) enclose the CRIM domain. The interval 279 to 353 (LFVRINAAHG…QSAWEFCLVR (75 aa)) is SIN1-type RBD. One can recognise an SIN1-type PH domain in the interval 382–487 (HYKSFKVSMI…IVLKVNYILE (106 aa)). Arg-393 is an a 1,2-diacyl-sn-glycero-3-phospho-(1D-myo-inositol-3,4,5-trisphosphate) binding site. Thr-398 carries the phosphothreonine modification. The a 1,2-diacyl-sn-glycero-3-phospho-(1D-myo-inositol-3,4,5-trisphosphate) site is built by Lys-428 and Lys-464. Residues 468 to 522 (FESDAATVNEIVLKVNYILESRASTARADYFAQKQRKLNRRTSFSFQKEKKSGQQ) form an interaction with ATF2 region. Phosphoserine is present on Ser-510.

This sequence belongs to the SIN1 family. Component of the mechanistic target of rapamycin complex 2 (mTORC2), consisting in two heterotretramers composed of MTOR, MLST8, RICTOR and MAPKAP1/SIN1. The mTORC2 core complex associates with PRR5/PROTOR1 and/or PRR5L/PROTOR2. Contrary to mTORC1, mTORC2 does not bind to and is not sensitive to FKBP12-rapamycin. Interacts with MAP3K2. Interacts with ATF2. Interacts with MAPK8. Interacts with GTP-bound HRAS and KRAS; inhibiting their activity. Interacts with IFNAR2. In terms of assembly, interacts with CCDC28B. As to quaternary structure, interacts with NBN. Post-translationally, phosphorylation at Ser-128 by PKC promotes relocalization to the perinuclear region, where the mTORC2 complex specifically mediates phosphorylation of SGK1. Phosphorylated at Thr-86 by AKT1 or RPS6KB1 in the presence of growth factors; the effect of this phosphorylation is however unclear. According to two studies, phosphorylation at Thr-86 by AKT1 is part of a positive feedback loop that increases mTORC2 activation. According to another study, phosphorylation at Thr-86 and Thr-398 by RPS6KB1 promotes dissociation from the mTORC2 complex, leading to inhibit mTORC2 signaling. As to expression, ubiquitously expressed, with highest levels in heart and skeletal muscle.

It is found in the cell membrane. The protein localises to the endoplasmic reticulum membrane. Its subcellular location is the early endosome membrane. The protein resides in the late endosome membrane. It localises to the lysosome membrane. It is found in the golgi apparatus membrane. The protein localises to the mitochondrion outer membrane. Its subcellular location is the cytoplasm. The protein resides in the perinuclear region. It localises to the nucleus. It is found in the cytosol. Its activity is regulated as follows. Phosphatidylinositol 3,4,5-trisphosphate (PI(3,4,5)P3) promotes MTOR activation by relieving MAPKAP1/SIN1-mediated inhibition of MTOR that takes place in absence of PI(3,4,5)P3. Its function is as follows. Component of the mechanistic target of rapamycin complex 2 (mTORC2), which transduces signals from growth factors to pathways involved in proliferation, cytoskeletal organization, lipogenesis and anabolic output. In response to growth factors, mTORC2 phosphorylates and activates AGC protein kinase family members, including AKT (AKT1, AKT2 and AKT3), PKC (PRKCA, PRKCB and PRKCE) and SGK1. In contrast to mTORC1, mTORC2 is nutrient-insensitive. Within the mTORC2 complex, MAPKAP1/SIN1 acts as a substrate adapter which recognizes and binds AGC protein kinase family members for phosphorylation by MTOR. mTORC2 plays a critical role in AKT1 activation by mediating phosphorylation of different sites depending on the context, such as 'Thr-450', 'Ser-473', 'Ser-477' or 'Thr-479', facilitating the phosphorylation of the activation loop of AKT1 on 'Thr-308' by PDPK1/PDK1 which is a prerequisite for full activation. mTORC2 catalyzes the phosphorylation of SGK1 at 'Ser-422' and of PRKCA on 'Ser-657'. The mTORC2 complex also phosphorylates various proteins involved in insulin signaling, such as FBXW8 and IGF2BP1. mTORC2 acts upstream of Rho GTPases to regulate the actin cytoskeleton, probably by activating one or more Rho-type guanine nucleotide exchange factors. mTORC2 promotes the serum-induced formation of stress-fibers or F-actin. MAPKAP1 inhibits MAP3K2 by preventing its dimerization and autophosphorylation. Inhibits HRAS and KRAS independently of mTORC2 complex. Enhances osmotic stress-induced phosphorylation of ATF2 and ATF2-mediated transcription. Involved in ciliogenesis, regulates cilia length through its interaction with CCDC28B independently of mTORC2 complex. In contrast to isoform 1, isoform 2 and isoform 6, isoform 4 is not a component of the a mTORC2 complex. The chain is Target of rapamycin complex 2 subunit MAPKAP1 from Homo sapiens (Human).